A 549-amino-acid chain; its full sequence is Cation/acetate symporter ActP (549 aa).

Helical transmembrane passes span 32 to 54, 75 to 97, 102 to 124, 145 to 167, 182 to 204, 211 to 233, 263 to 285, 298 to 320, 361 to 383, 404 to 423, 428 to 450, 462 to 484, and 494 to 516; these read IQAI…WASK, GMAI…LVYT, GLIY…AERL, IRIL…QMVG, VAVV…LATT, AILL…NFNF, ALSL…MRFF, FYAT…GAIL, AVAF…SAVS, VSKI…GILF, IAFM…ILLS, LVGG…TIWV, and YPYE…LFSI.

The protein belongs to the sodium:solute symporter (SSF) (TC 2.A.21) family.

The protein resides in the cell inner membrane. Transports acetate. This Photorhabdus laumondii subsp. laumondii (strain DSM 15139 / CIP 105565 / TT01) (Photorhabdus luminescens subsp. laumondii) protein is Cation/acetate symporter ActP.